Here is a 428-residue protein sequence, read N- to C-terminus: Enolase (428 aa).

Gln163 is a (2R)-2-phosphoglycerate binding site. Glu205 (proton donor) is an active-site residue. The Mg(2+) site is built by Asp242, Glu285, and Asp312. Residues Lys337, Arg366, Ser367, and Lys388 each coordinate (2R)-2-phosphoglycerate. The Proton acceptor role is filled by Lys337.

It belongs to the enolase family. It depends on Mg(2+) as a cofactor.

Its subcellular location is the cytoplasm. The protein localises to the secreted. It is found in the cell surface. It carries out the reaction (2R)-2-phosphoglycerate = phosphoenolpyruvate + H2O. The protein operates within carbohydrate degradation; glycolysis; pyruvate from D-glyceraldehyde 3-phosphate: step 4/5. Functionally, catalyzes the reversible conversion of 2-phosphoglycerate (2-PG) into phosphoenolpyruvate (PEP). It is essential for the degradation of carbohydrates via glycolysis. The sequence is that of Enolase from Neisseria gonorrhoeae (strain ATCC 700825 / FA 1090).